The chain runs to 664 residues: MKRRNADCSKLRRPLKRNRITEGIYGSTFLYLKFLVVWALVLLADFVLEFRFEYLWPFWLFIRSVYDSFRYQGLAFSVFFVCVAFTSNIICLLFIPIQWLFFAASTYVWVQYVWHTERGVCLPTVSLWILFVYIEAAIRFKDLKNFHVDLCRPFAAHCIGYPVVTLGFGFKSYVSYKMRLRKQKEVQKENEFYMQLLQQALPPEQQMLQKQEKEAEEAAKGLPDMDSSILIHHNGGIPANKKLSTTLPEIEYREKGKEKDKDAKKHNLGINNNNILQPVDSKIQEIEYMENHINSKRLNNDLVGSTENLLKEDSCTASSKNYKNASGVVNSSPRSHSATNGSIPSSSSKNEKKQKCTSKSPSAHKDLMENCIPNNQLSKPDALVRLEQDIKKLKADLQASRQVEQELRSQISSLSSTERGIRSEMGQLRQENELLQNKLHNAVQMKQKDKQNISQLEKKLKAEQEARSFVEKQLMEEKKRKKLEEATAARAVAFAAASRGECTETLRNRIRELEAEGKKLTMDMKVKEDQIRELELKVQELRKYKENEKDTEVLMSALSAMQDKTQHLENSLSAETRIKLDLFSALGDAKRQLEIAQGQILQKDQEIKDLKQKIAEVMAVMPSITYSAAASPLSPVSPHYSSKFVETSPSGLDPNASVYQPLKK.

The next 4 helical transmembrane spans lie at 28-48 (TFLYLKFLVVWALVLLADFVL), 75-95 (AFSVFFVCVAFTSNIICLLFI), 120-140 (VCLPTVSLWILFVYIEAAIRF), and 154-174 (FAAHCIGYPVVTLGFGFKSYV). The span at 253 to 265 (REKGKEKDKDAKK) shows a compositional bias: basic and acidic residues. Residues 253–274 (REKGKEKDKDAKKHNLGINNNN) form a disordered region. The residue at position 305 (serine 305) is a Phosphoserine. Residues 320-348 (KNYKNASGVVNSSPRSHSATNGSIPSSSS) show a composition bias toward polar residues. The disordered stretch occupies residues 320-367 (KNYKNASGVVNSSPRSHSATNGSIPSSSSKNEKKQKCTSKSPSAHKDL). N-linked (GlcNAc...) asparagine glycosylation is present at asparagine 324. Serine 332 is subject to Phosphoserine. N-linked (GlcNAc...) asparagine glycosylation is found at asparagine 340 and asparagine 452. 2 positions are modified to phosphoserine: serine 631 and serine 634. Residues 631-664 (SPLSPVSPHYSSKFVETSPSGLDPNASVYQPLKK) form a disordered region. The N-linked (GlcNAc...) asparagine glycan is linked to asparagine 655.

Belongs to the macoilin family.

Its subcellular location is the rough endoplasmic reticulum membrane. The protein localises to the nucleus membrane. Plays a role in the regulation of neuronal activity. This Bos taurus (Bovine) protein is Macoilin (MACO1).